The sequence spans 224 residues: DNA mismatch repair protein MutH (224 aa).

It belongs to the MutH family.

Its subcellular location is the cytoplasm. In terms of biological role, sequence-specific endonuclease that cleaves unmethylated GATC sequences. It is involved in DNA mismatch repair. The polypeptide is DNA mismatch repair protein MutH (Histophilus somni (strain 129Pt) (Haemophilus somnus)).